The primary structure comprises 511 residues: Phosphoenolpyruvate carboxylase (511 aa).

The protein belongs to the PEPCase type 2 family. In terms of assembly, homotetramer. Mg(2+) is required as a cofactor.

It carries out the reaction oxaloacetate + phosphate = phosphoenolpyruvate + hydrogencarbonate. In terms of biological role, catalyzes the irreversible beta-carboxylation of phosphoenolpyruvate (PEP) to form oxaloacetate (OAA), a four-carbon dicarboxylic acid source for the tricarboxylic acid cycle. In Saccharolobus islandicus (strain Y.G.57.14 / Yellowstone #1) (Sulfolobus islandicus), this protein is Phosphoenolpyruvate carboxylase.